Here is a 260-residue protein sequence, read N- to C-terminus: MAYENIILEKEEKLAVLYINRPKAMNALNKDTLLEIKDAVTAVNDDPAVELLIITGSGDKSFVAGADIAFMQNLSAMEAREFGALGQKVFRLIEAMEKPVIAAVNGFALGGGCELAMCCDFRIAASNAKFGQPEVGLGITPGFGGTQRLPRLVGPGMAKQLLYTADVINADEAFRIGLVNKVVQPEELLPEVKKIAGRILSKGQLAVRLSKAAANEGMQTDIDRAMSIEADAFGLCFATQDQKEGMTAFLEKRKANFISK.

Catalysis depends on E114, which acts as the Nucleophile. E134 acts as the Proton acceptor in catalysis.

This sequence belongs to the enoyl-CoA hydratase/isomerase family. As to quaternary structure, homotetramer.

The protein localises to the cytoplasm. It catalyses the reaction 3-hydroxybutanoyl-CoA = (2E)-butenoyl-CoA + H2O. The enzyme catalyses a short-chain (3S)-3-hydroxyacyl-CoA = a short-chain (2E)-enoyl-CoA + H2O. It participates in lipid metabolism; butanoate metabolism. Functionally, involved in syntrophic growth of S.wolfei with butyrate, as part of the butyrate oxidation pathway. Probably catalyzes the hydration of crotonyl-CoA to 3-hydroxybutyryl-CoA. The sequence is that of Crotonyl-CoA hydratase from Syntrophomonas wolfei subsp. wolfei (strain DSM 2245B / Goettingen).